The chain runs to 619 residues: Dihydroxy-acid dehydratase (619 aa).

D81 is a binding site for Mg(2+). C122 provides a ligand contact to [2Fe-2S] cluster. Mg(2+) is bound by residues D123 and K124. K124 bears the N6-carboxylysine mark. C195 contacts [2Fe-2S] cluster. Residue E492 coordinates Mg(2+). Residue S518 is the Proton acceptor of the active site.

This sequence belongs to the IlvD/Edd family. Homodimer. The cofactor is [2Fe-2S] cluster. Requires Mg(2+) as cofactor.

It carries out the reaction (2R)-2,3-dihydroxy-3-methylbutanoate = 3-methyl-2-oxobutanoate + H2O. The catalysed reaction is (2R,3R)-2,3-dihydroxy-3-methylpentanoate = (S)-3-methyl-2-oxopentanoate + H2O. Its pathway is amino-acid biosynthesis; L-isoleucine biosynthesis; L-isoleucine from 2-oxobutanoate: step 3/4. The protein operates within amino-acid biosynthesis; L-valine biosynthesis; L-valine from pyruvate: step 3/4. Functionally, functions in the biosynthesis of branched-chain amino acids. Catalyzes the dehydration of (2R,3R)-2,3-dihydroxy-3-methylpentanoate (2,3-dihydroxy-3-methylvalerate) into 2-oxo-3-methylpentanoate (2-oxo-3-methylvalerate) and of (2R)-2,3-dihydroxy-3-methylbutanoate (2,3-dihydroxyisovalerate) into 2-oxo-3-methylbutanoate (2-oxoisovalerate), the penultimate precursor to L-isoleucine and L-valine, respectively. In Synechococcus elongatus (strain ATCC 33912 / PCC 7942 / FACHB-805) (Anacystis nidulans R2), this protein is Dihydroxy-acid dehydratase.